Reading from the N-terminus, the 134-residue chain is Small ribosomal subunit protein uS11 (134 aa).

Residues 114–134 are disordered; the sequence is SISDVTPQPHNGCRPPKRRRV.

The protein belongs to the universal ribosomal protein uS11 family. As to quaternary structure, part of the 30S ribosomal subunit. Interacts with proteins S7 and S18. Binds to IF-3.

Functionally, located on the platform of the 30S subunit, it bridges several disparate RNA helices of the 16S rRNA. Forms part of the Shine-Dalgarno cleft in the 70S ribosome. The protein is Small ribosomal subunit protein uS11 of Corynebacterium efficiens (strain DSM 44549 / YS-314 / AJ 12310 / JCM 11189 / NBRC 100395).